Consider the following 244-residue polypeptide: MAEFNLAELNALPKSGQALSLAVVNGQLETLSAEQRVEWALEHLPGEFVLSSSFGIQAAVCLHLVTRIKPDIPVILTDTGYLFPETYQFIDQLADKLKLNLQVFRAEQSPAWQEARYGKLWEQGVEGIEKYNQINKVEPMNRALETLGGQTWFAGLRREQSGSRAHLPVLAVQRGVFKILPIIDWDNRKIYQYLTEHGLSYHPLWEQGYLSVGDTHTTQKWEPGMSEEETRFFGLKRECGLHEG.

C239 acts as the Nucleophile; cysteine thiosulfonate intermediate in catalysis.

It belongs to the PAPS reductase family. CysH subfamily.

Its subcellular location is the cytoplasm. The catalysed reaction is [thioredoxin]-disulfide + sulfite + adenosine 3',5'-bisphosphate + 2 H(+) = [thioredoxin]-dithiol + 3'-phosphoadenylyl sulfate. The protein operates within sulfur metabolism; hydrogen sulfide biosynthesis; sulfite from sulfate: step 3/3. In terms of biological role, catalyzes the formation of sulfite from phosphoadenosine 5'-phosphosulfate (PAPS) using thioredoxin as an electron donor. This Serratia proteamaculans (strain 568) protein is Phosphoadenosine 5'-phosphosulfate reductase.